A 336-amino-acid chain; its full sequence is Pyridoxal 5'-phosphate synthase subunit PdxS (336 aa).

Residue Asp33 participates in D-ribose 5-phosphate binding. The active-site Schiff-base intermediate with D-ribose 5-phosphate is the Lys90. Residue Gly162 coordinates D-ribose 5-phosphate. Arg174 provides a ligand contact to D-glyceraldehyde 3-phosphate. D-ribose 5-phosphate-binding positions include Gly260 and 281–282; that span reads GS.

This sequence belongs to the PdxS/SNZ family. In terms of assembly, in the presence of PdxT, forms a dodecamer of heterodimers.

The enzyme catalyses aldehydo-D-ribose 5-phosphate + D-glyceraldehyde 3-phosphate + L-glutamine = pyridoxal 5'-phosphate + L-glutamate + phosphate + 3 H2O + H(+). It participates in cofactor biosynthesis; pyridoxal 5'-phosphate biosynthesis. Catalyzes the formation of pyridoxal 5'-phosphate from ribose 5-phosphate (RBP), glyceraldehyde 3-phosphate (G3P) and ammonia. The ammonia is provided by the PdxT subunit. Can also use ribulose 5-phosphate and dihydroxyacetone phosphate as substrates, resulting from enzyme-catalyzed isomerization of RBP and G3P, respectively. This is Pyridoxal 5'-phosphate synthase subunit PdxS from Picrophilus torridus (strain ATCC 700027 / DSM 9790 / JCM 10055 / NBRC 100828 / KAW 2/3).